The following is a 125-amino-acid chain: Large ribosomal subunit protein bL20 (125 aa).

This sequence belongs to the bacterial ribosomal protein bL20 family.

In terms of biological role, binds directly to 23S ribosomal RNA and is necessary for the in vitro assembly process of the 50S ribosomal subunit. It is not involved in the protein synthesizing functions of that subunit. This is Large ribosomal subunit protein bL20 from Methylobacterium sp. (strain 4-46).